The primary structure comprises 576 residues: G protein-coupled receptor kinase 6 (576 aa).

The segment at 1 to 185 (MELENIVANT…LERQPVTKNT (185 aa)) is N-terminal. The RGS domain occupies 53–171 (YHSLCERQPI…LDSIYFNRFL (119 aa)). The Protein kinase domain occupies 186–448 (FRQYRVLGKG…AREVKEHPLF (263 aa)). Residues 192 to 200 (LGKGGFGEV), K215, and 264 to 270 (TLMNGGD) contribute to the ATP site. D311 acts as the Proton acceptor in catalysis. 315 to 318 (ENIL) provides a ligand contact to ATP. Residues 449–514 (KKLNFKRLGA…GSVSIPWQNE (66 aa)) form the AGC-kinase C-terminal domain. Phosphoserine is present on S484. A Phosphothreonine modification is found at T485. Residues C561, C562, and C565 are each lipidated (S-palmitoyl cysteine). A phosphoserine mark is found at S566 and S568.

It belongs to the protein kinase superfamily. AGC Ser/Thr protein kinase family. GPRK subfamily. In terms of assembly, interacts with GIT1. In terms of tissue distribution, expressed in the brain in striatal neurons.

The protein resides in the membrane. The enzyme catalyses [G-protein-coupled receptor] + ATP = [G-protein-coupled receptor]-phosphate + ADP + H(+). Its function is as follows. Specifically phosphorylates the activated forms of G protein-coupled receptors. Such receptor phosphorylation initiates beta-arrestin-mediated receptor desensitization, internalization, and signaling events leading to their desensitization. Seems to be involved in the desensitization of D2-like dopamine receptors in striatum and chemokine receptor CXCR4 which is critical for CXCL12-induced cell chemotaxis. Phosphorylates rhodopsin (RHO) (in vitro) and a non G-protein-coupled receptor, LRP6 during Wnt signaling (in vitro). This Mus musculus (Mouse) protein is G protein-coupled receptor kinase 6 (Grk6).